The primary structure comprises 337 residues: Phenylalanine--tRNA ligase alpha subunit (337 aa).

Mg(2+) is bound at residue glutamate 252.

The protein belongs to the class-II aminoacyl-tRNA synthetase family. Phe-tRNA synthetase alpha subunit type 1 subfamily. Tetramer of two alpha and two beta subunits. The cofactor is Mg(2+).

Its subcellular location is the cytoplasm. The enzyme catalyses tRNA(Phe) + L-phenylalanine + ATP = L-phenylalanyl-tRNA(Phe) + AMP + diphosphate + H(+). In Cellvibrio japonicus (strain Ueda107) (Pseudomonas fluorescens subsp. cellulosa), this protein is Phenylalanine--tRNA ligase alpha subunit.